Reading from the N-terminus, the 392-residue chain is Acetyl-CoA acetyltransferase (392 aa).

Cys85 (acyl-thioester intermediate) is an active-site residue. CoA-binding residues include Cys206, Ser207, Val209, and Lys332. His336 (proton acceptor) is an active-site residue.

Belongs to the thiolase-like superfamily. Thiolase family. Interacts with HMG-CoA synthase (HMGCS) that catalyzes the second step in the pathway and with a DUF35 protein. The acetoacetyl-CoA thiolase/HMG-CoA synthase complex channels the intermediate via a fused CoA-binding site, which allows for efficient coupling of the endergonic thiolase reaction with the exergonic HMGCS reaction.

It catalyses the reaction 2 acetyl-CoA = acetoacetyl-CoA + CoA. Its pathway is metabolic intermediate biosynthesis; (R)-mevalonate biosynthesis; (R)-mevalonate from acetyl-CoA: step 1/3. Functionally, catalyzes the condensation of two acetyl-coA molecules into acetoacetyl-CoA. Functions in the mevalonate (MVA) pathway leading to isopentenyl diphosphate (IPP), a key precursor for the biosynthesis of isoprenoid compounds that are building blocks of archaeal membrane lipids. This Methanocaldococcus jannaschii (strain ATCC 43067 / DSM 2661 / JAL-1 / JCM 10045 / NBRC 100440) (Methanococcus jannaschii) protein is Acetyl-CoA acetyltransferase.